A 220-amino-acid chain; its full sequence is Polyadenylate-binding protein 2 (220 aa).

A disordered region spans residues 1–24; sequence MEEEEHEVYGGEIPDVGEMDGDME. The stretch at 34-74 forms a coiled coil; that stretch reads AADDDAVKELDEMKKRLKEMEDEAAALREMQAKVEKEMGAQ. A necessary for homooligomerization region spans residues 78 to 219; the sequence is SIAANQAGKE…FRRPMRYMPY (142 aa). An RRM domain is found at 92–168; it reads RSVFVGNVDY…RQLKVLQKRT (77 aa). Positions 165–172 match the Nuclear localization signal motif; that stretch reads QKRTNVPG.

In terms of assembly, monomer and homooligomer. Binds RNA as a monomer and oligomerizes when bound to poly(A). Forms a complex with cleavage and polyadenylation specificity factor (CPSF) subunits PAPS2, FIPS5, PABN3 and PABN1. Interacts with CSP3.

It localises to the nucleus speckle. The protein resides in the cytoplasm. Its function is as follows. Involved in the 3'-end formation of mRNA precursors (pre-mRNA) by the addition of a poly(A) tail of 200-250 nt to the upstream cleavage product. Stimulates poly(A) polymerase (PAPOLA) conferring processivity on the poly(A) tail elongation reaction and also controls the poly(A) tail length. Increases the affinity of poly(A) polymerase for RNA. Binds to poly(A) and to poly(G) with high affinity. May protect the poly(A) tail from degradation. The protein is Polyadenylate-binding protein 2 of Arabidopsis thaliana (Mouse-ear cress).